Here is a 116-residue protein sequence, read N- to C-terminus: Large ribosomal subunit protein bL17 (116 aa).

This sequence belongs to the bacterial ribosomal protein bL17 family. As to quaternary structure, part of the 50S ribosomal subunit. Contacts protein L32.

The sequence is that of Large ribosomal subunit protein bL17 from Picosynechococcus sp. (strain ATCC 27264 / PCC 7002 / PR-6) (Agmenellum quadruplicatum).